We begin with the raw amino-acid sequence, 458 residues long: GTPase Der (458 aa).

2 consecutive EngA-type G domains span residues 9–171 (KTIA…DLNQ) and 197–368 (IQVG…ECFS). Residues 15–22 (GQPNVGKS), 62–66 (DTGGM), 123–126 (NKID), 203–210 (GRVNVGKS), 250–254 (DTAGI), and 314–317 (NKWD) contribute to the GTP site. The 85-residue stretch at 369-453 (KRIPTSLLNS…PLILNAKDKK (85 aa)) folds into the KH-like domain.

The protein belongs to the TRAFAC class TrmE-Era-EngA-EngB-Septin-like GTPase superfamily. EngA (Der) GTPase family. In terms of assembly, associates with the 50S ribosomal subunit.

GTPase that plays an essential role in the late steps of ribosome biogenesis. The polypeptide is GTPase Der (Helicobacter pylori (strain ATCC 700392 / 26695) (Campylobacter pylori)).